A 486-amino-acid chain; its full sequence is Malonate-semialdehyde dehydrogenase (486 aa).

Residues phenylalanine 154, lysine 178, glutamate 181, arginine 182, and serine 231 each coordinate NAD(+). Cysteine 286 functions as the Nucleophile in the catalytic mechanism. NAD(+) is bound at residue glutamate 386.

This sequence belongs to the aldehyde dehydrogenase family. IolA subfamily. As to quaternary structure, homotetramer.

The enzyme catalyses 3-oxopropanoate + NAD(+) + CoA + H2O = hydrogencarbonate + acetyl-CoA + NADH + H(+). It catalyses the reaction 2-methyl-3-oxopropanoate + NAD(+) + CoA + H2O = propanoyl-CoA + hydrogencarbonate + NADH + H(+). The protein operates within polyol metabolism; myo-inositol degradation into acetyl-CoA; acetyl-CoA from myo-inositol: step 7/7. Catalyzes the oxidation of malonate semialdehyde (MSA) and methylmalonate semialdehyde (MMSA) into acetyl-CoA and propanoyl-CoA, respectively. Is involved in a myo-inositol catabolic pathway. Bicarbonate, and not CO2, is the end-product of the enzymatic reaction. This is Malonate-semialdehyde dehydrogenase from Bacillus cereus (strain AH187).